The following is a 206-amino-acid chain: Cell division protein SepF (206 aa).

Residues 31–53 show a composition bias toward basic and acidic residues; that stretch reads EEKERRKTERQEQRQAVKQEKRT. Residues 31–81 form a disordered region; it reads EEKERRKTERQEQRQAVKQEKRTFPSQRPAFSEEAPTSSSSKLSAASGSSD. A compositionally biased stretch (low complexity) spans 60–80; that stretch reads AFSEEAPTSSSSKLSAASGSS.

It belongs to the SepF family. Homodimer. Interacts with FtsZ.

The protein resides in the cytoplasm. Cell division protein that is part of the divisome complex and is recruited early to the Z-ring. Probably stimulates Z-ring formation, perhaps through the cross-linking of FtsZ protofilaments. Its function overlaps with FtsA. This is Cell division protein SepF from Lachnoclostridium phytofermentans (strain ATCC 700394 / DSM 18823 / ISDg) (Clostridium phytofermentans).